The following is a 249-amino-acid chain: UPF0758 protein BMEI0718 (249 aa).

A disordered region spans residues 1 to 34 (MAKKKDTPGDGEFPGFSDTLQRTPKLEKPHYAGH). Positions 24-34 (PKLEKPHYAGH) are enriched in basic and acidic residues. The MPN domain maps to 127–249 (VLGSWDKVIN…HASLRSLRLI (123 aa)). Positions 198, 200, and 211 each coordinate Zn(2+). Positions 198-211 (HNHPSGDPTPSRAD) match the JAMM motif motif.

The protein belongs to the UPF0758 family.

In Brucella melitensis biotype 1 (strain ATCC 23456 / CCUG 17765 / NCTC 10094 / 16M), this protein is UPF0758 protein BMEI0718.